Consider the following 711-residue polypeptide: Ribosomal RNA large subunit methyltransferase K/L (711 aa).

Residues 42 to 153 (DAQRAVLWSR…KGRATISVDL (112 aa)) enclose the THUMP domain.

This sequence belongs to the methyltransferase superfamily. RlmKL family.

Its subcellular location is the cytoplasm. The catalysed reaction is guanosine(2445) in 23S rRNA + S-adenosyl-L-methionine = N(2)-methylguanosine(2445) in 23S rRNA + S-adenosyl-L-homocysteine + H(+). It catalyses the reaction guanosine(2069) in 23S rRNA + S-adenosyl-L-methionine = N(2)-methylguanosine(2069) in 23S rRNA + S-adenosyl-L-homocysteine + H(+). Specifically methylates the guanine in position 2445 (m2G2445) and the guanine in position 2069 (m7G2069) of 23S rRNA. This is Ribosomal RNA large subunit methyltransferase K/L from Xanthomonas campestris pv. campestris (strain B100).